The chain runs to 200 residues: ATP-dependent Clp protease proteolytic subunit (200 aa).

S101 serves as the catalytic Nucleophile. H126 is a catalytic residue.

This sequence belongs to the peptidase S14 family. As to quaternary structure, component of the chloroplastic Clp protease core complex.

The protein resides in the plastid. It is found in the chloroplast stroma. It carries out the reaction Hydrolysis of proteins to small peptides in the presence of ATP and magnesium. alpha-casein is the usual test substrate. In the absence of ATP, only oligopeptides shorter than five residues are hydrolyzed (such as succinyl-Leu-Tyr-|-NHMec, and Leu-Tyr-Leu-|-Tyr-Trp, in which cleavage of the -Tyr-|-Leu- and -Tyr-|-Trp bonds also occurs).. Functionally, cleaves peptides in various proteins in a process that requires ATP hydrolysis. Has a chymotrypsin-like activity. Plays a major role in the degradation of misfolded proteins. In Ostreococcus tauri, this protein is ATP-dependent Clp protease proteolytic subunit.